Reading from the N-terminus, the 95-residue chain is Costars family protein WS02710_H03 (95 aa).

It belongs to the costars family.

The polypeptide is Costars family protein WS02710_H03 (Picea sitchensis (Sitka spruce)).